A 94-amino-acid chain; its full sequence is Small ribosomal subunit protein uS19 (94 aa).

Belongs to the universal ribosomal protein uS19 family.

In terms of biological role, protein S19 forms a complex with S13 that binds strongly to the 16S ribosomal RNA. The sequence is that of Small ribosomal subunit protein uS19 from Anaplasma phagocytophilum (strain HZ).